The primary structure comprises 114 residues: Nucleoid-associated protein PCC7424_2224 (114 aa).

It belongs to the YbaB/EbfC family. In terms of assembly, homodimer.

The protein localises to the cytoplasm. Its subcellular location is the nucleoid. In terms of biological role, binds to DNA and alters its conformation. May be involved in regulation of gene expression, nucleoid organization and DNA protection. In Gloeothece citriformis (strain PCC 7424) (Cyanothece sp. (strain PCC 7424)), this protein is Nucleoid-associated protein PCC7424_2224.